A 213-amino-acid chain; its full sequence is MKLTLVQIFFMMLLLLLGLGMGLGLGLQMAAAVLEDSDQSLNDFWSSDSQEKAETTKEGDGTRTTETLLLSNKGVVQPVWPEETILAEDEVGGNKMLRADALFQSDKDYLRLDLMNRECNSLMAHKVKKRNHTCIPEYTFIHEELDTVKAVCKNPVVACDLKGAKCHKSSRPFDLTFCKLSKPGQVTPHCNYLTFIFEKFIIISCNDMKVKIT.

An N-terminal signal peptide occupies residues M1–G24. The N-linked (GlcNAc...) asparagine glycan is linked to N131.

The protein belongs to the pancreatic ribonuclease family. Post-translationally, the N-terminus is blocked. Glycosylated. In terms of tissue distribution, male-specific expression in proximal caput of the epididymis.

It localises to the secreted. Secreted proximal epididymal protein required for post-testicular sperm maturation and male fertility. May be involved in sperm adhesion to the egg zona pellucida. Does not have ribonuclease activity. In Equus caballus (Horse), this protein is Inactive ribonuclease-like protein 10 (RNASE10).